Here is a 1377-residue protein sequence, read N- to C-terminus: Neogenin (1377 aa).

The N-terminal stretch at 1 to 2 is a signal peptide; sequence AA. The Extracellular segment spans residues 3–1074; the sequence is AKNGSPPQSA…PTSPLDSNML (1072 aa). 4 consecutive Ig-like C2-type domains span residues 21-114, 121-206, 198-305, and 310-395; these read PLYF…RTAK, PRFT…EAEL, PKFS…AELT, and PEFL…AQLI. An N-linked (GlcNAc...) asparagine glycan is attached at N42. Cystine bridges form between C43–C98, C142–C190, and C239–C289. The N-linked (GlcNAc...) asparagine glycan is linked to N179. The N-linked (GlcNAc...) asparagine glycan is linked to N295. The cysteines at positions 331 and 379 are disulfide-linked. Fibronectin type-III domains follow at residues 410-504, 510-600, 605-700, 710-800, 825-924, and 926-1023; these read APRD…TQPE, PAPN…TLSD, APQN…TFES, VPSS…RPHT, PPVG…LVPT, and PPKD…TPKA. N-linked (GlcNAc...) asparagine glycans are attached at residues N439 and N458. N608 and N684 each carry an N-linked (GlcNAc...) asparagine glycan. A glycan (N-linked (GlcNAc...) asparagine) is linked at N878. The tract at residues 1010–1066 is disordered; it reads GPMSEAVQFRTPKADSSDKMPNDQALGSAGKGGRLPDLGSDYKPPMSGSNSPHGSPT. The segment covering 1021 to 1030 has biased composition (basic and acidic residues); sequence PKADSSDKMP. Positions 1056 to 1066 are enriched in polar residues; the sequence is SGSNSPHGSPT. Residues 1075-1095 form a helical membrane-spanning segment; it reads LVIIVSIGVITIVVVVIIAVF. Over 1096 to 1377 the chain is Cytoplasmic; it reads CTRRTTSHQK…MKDLNAITTA (282 aa). Residues 1143-1281 are disordered; sequence PIDKSPDPNP…SHPLKSFAVP (139 aa). Phosphoserine is present on residues S1147 and S1163. 3 stretches are compositionally biased toward polar residues: residues 1160–1176, 1213–1238, and 1246–1265; these read PRNSQDITPVDNSMDSN, QPPQQSVRNTPSTDTMPASSSQTCCT, and ATSSSYLASSQEEDSGQSLP. Position 1167 is a phosphothreonine (T1167). Position 1317 is a phosphoserine (S1317). The residue at position 1320 (T1320) is a Phosphothreonine. A phosphoserine mark is found at S1348, S1350, and S1351.

The protein belongs to the immunoglobulin superfamily. DCC family. Interacts with MYO10. Interacts with RGMA and RGMB. Interacts with BMP2, BMP4, BMP6, and BMP7.

It is found in the cell membrane. In terms of biological role, multi-functional cell surface receptor regulating cell adhesion in many diverse developmental processes, including neural tube and mammary gland formation, myogenesis and angiogenesis. Receptor for members of the BMP, netrin, and repulsive guidance molecule (RGM) families. Netrin-Neogenin interactions result in a chemoattractive axon guidance response and cell-cell adhesion, the interaction between NEO1/Neogenin and RGMa and RGMb induces a chemorepulsive response. The protein is Neogenin (Neo1) of Rattus norvegicus (Rat).